Here is an 87-residue protein sequence, read N- to C-terminus: RNA-binding protein Hfq (87 aa).

In terms of domain architecture, Sm spans D9–N68. The tract at residues H66–P87 is disordered.

Belongs to the Hfq family. Homohexamer.

Its function is as follows. RNA chaperone that binds small regulatory RNA (sRNAs) and mRNAs to facilitate mRNA translational regulation in response to envelope stress, environmental stress and changes in metabolite concentrations. Also binds with high specificity to tRNAs. This is RNA-binding protein Hfq from Wigglesworthia glossinidia brevipalpis.